The sequence spans 465 residues: Cysteine--tRNA ligase (465 aa).

Cys-27 contacts Zn(2+). Positions 29-39 (PTVYDDAHLGH) match the 'HIGH' region motif. Residues Cys-207, His-237, and Glu-241 each coordinate Zn(2+). A 'KMSKS' region motif is present at residues 269–273 (KMSKS). Lys-272 is a binding site for ATP.

Belongs to the class-I aminoacyl-tRNA synthetase family. In terms of assembly, monomer. Zn(2+) is required as a cofactor.

It is found in the cytoplasm. It carries out the reaction tRNA(Cys) + L-cysteine + ATP = L-cysteinyl-tRNA(Cys) + AMP + diphosphate. The polypeptide is Cysteine--tRNA ligase (Helicobacter pylori (strain Shi470)).